Here is a 140-residue protein sequence, read N- to C-terminus: FAD synthase (140 aa).

ATP-binding positions include 10–11 (TF), 15–18 (HPGH), and Asn-93.

The protein belongs to the archaeal FAD synthase family. In terms of assembly, homodimer. A divalent metal cation is required as a cofactor.

It catalyses the reaction FMN + ATP + H(+) = FAD + diphosphate. Its pathway is cofactor biosynthesis; FAD biosynthesis; FAD from FMN: step 1/1. Functionally, catalyzes the transfer of the AMP portion of ATP to flavin mononucleotide (FMN) to produce flavin adenine dinucleotide (FAD) coenzyme. This Methanocella arvoryzae (strain DSM 22066 / NBRC 105507 / MRE50) protein is FAD synthase.